Consider the following 414-residue polypeptide: Isocitrate dehydrogenase [NADP] cytoplasmic (414 aa).

Ser2 bears the N-acetylserine mark. Tyr42 is modified (phosphotyrosine). NADP(+) is bound at residue 75-77; it reads TIT. A substrate-binding site is contributed by Thr77. Lys81 is modified (N6-acetyllysine). Arg82 provides a ligand contact to NADP(+). Substrate contacts are provided by residues 94–100 and Arg109; that span reads SPNGTIR. Lys126 is modified (N6-succinyllysine). Arg132 and Lys212 together coordinate substrate. Lys224, Lys233, and Lys243 each carry N6-acetyllysine. Asp252 provides a ligand contact to Mn(2+). Lys260 contributes to the NADP(+) binding site. 2 residues coordinate Mn(2+): Asp275 and Asp279. 310–315 provides a ligand contact to NADP(+); that stretch reads GTVTRH. Lys321 is modified (N6-acetyllysine). Residue Asn328 coordinates NADP(+). Position 389 is a phosphoserine (Ser389). Lys400 is subject to N6-succinyllysine.

Belongs to the isocitrate and isopropylmalate dehydrogenases family. Homodimer. It depends on Mg(2+) as a cofactor. Mn(2+) serves as cofactor. Post-translationally, acetylation at Lys-374 dramatically reduces catalytic activity.

The protein localises to the cytoplasm. The protein resides in the cytosol. Its subcellular location is the peroxisome. The enzyme catalyses D-threo-isocitrate + NADP(+) = 2-oxoglutarate + CO2 + NADPH. In terms of biological role, catalyzes the NADP(+)-dependent oxidative decarboxylation of isocitrate (D-threo-isocitrate) to 2-ketoglutarate (2-oxoglutarate), which is required by other enzymes such as the phytanoyl-CoA dioxygenase. Plays a critical role in the generation of NADPH, an important cofactor in many biosynthesis pathways. May act as a corneal epithelial crystallin and may be involved in maintaining corneal epithelial transparency. The protein is Isocitrate dehydrogenase [NADP] cytoplasmic (IDH1) of Homo sapiens (Human).